A 592-amino-acid polypeptide reads, in one-letter code: Inactive metallocarboxypeptidase ECM14 (592 aa).

Residues 1-21 (MRQFTHGTLLAILALANTISA) form the signal peptide. Residues 22-174 (IPSFSANNYP…QTVYESYPSS (153 aa)) constitute a propeptide that is removed on maturation. Positions 170-179 (SYPSSSQRPT) are enriched in polar residues. The segment at 170–191 (SYPSSSQRPTDNGRGFLPSRES) is disordered. The Peptidase M14 domain maps to 202 to 521 (DYQPLSVIGP…NAVMVLAKFL (320 aa)). His-264 and Glu-267 together coordinate Zn(2+). Substrate is bound by residues 264–267 (HARE), Arg-322, and 339–340 (DR). Cys-333 and Cys-356 are joined by a disulfide. A glycan (N-linked (GlcNAc...) asparagine) is linked at Asn-349. A Zn(2+)-binding site is contributed by His-396. 397-398 (SY) contributes to the substrate binding site. The interval 542–592 (ADKPILDDGDDDEEEDGQDKKDDSWIPDEYKNDNDHDDDDDGWGLRRRRKR) is disordered. Residues 548–558 (DDGDDDEEEDG) are compositionally biased toward acidic residues. Basic and acidic residues predominate over residues 559 to 575 (QDKKDDSWIPDEYKNDN).

It belongs to the peptidase M14 family. The cofactor is Zn(2+).

Its subcellular location is the vacuole. It is found in the secreted. Inactive carboxypeptidase that may play a role in cell wall organization and biogenesis. This Ajellomyces dermatitidis (strain ER-3 / ATCC MYA-2586) (Blastomyces dermatitidis) protein is Inactive metallocarboxypeptidase ECM14 (ECM14).